The sequence spans 69 residues: Mu-conotoxin-like Am3.1 (69 aa).

The N-terminal stretch at 1 to 20 (MMSKLRVLLIICLLLFPLTA) is a signal peptide. Positions 21–52 (VPLDGDQPADRPAERTQDDISSEHHPMFDAVR) are excised as a propeptide. The tract at residues 22–43 (PLDGDQPADRPAERTQDDISSE) is disordered. The segment covering 28–43 (PADRPAERTQDDISSE) has biased composition (basic and acidic residues). Pro-66 is subject to 4-hydroxyproline; partial; in minor form. Cys-68 bears the Cysteine amide mark.

The protein belongs to the conotoxin M family. Post-translationally, mostly non-hydroxylated. Contains 3 disulfide bonds. Expressed by the venom duct.

The protein localises to the secreted. Its function is as follows. Mu-conotoxins block voltage-gated sodium channels (Nav). This is Mu-conotoxin-like Am3.1 from Conus amadis (Amadis cone).